The following is a 260-amino-acid chain: MIPGTETIRNVIADLRIAASFVTLLPVGSSKPAADGAIARATWALPVAGLLVGLAGALVYKISSRLGLTPNLAALLALATTALITGALHEDGLADTADGLGGGRTRERKLEIMRDSRIGTYGVCALILSFGLRWSALAAIANPWLVTLALCAAHCAARAGVPAFMSLVPPARPDGLSASAGAPPGRSVAIAFAVGTLVLTLALGPGKALVGLILLSLAGLILARLAIRQIGGQTGDILGAFEQTGEIVILLVAAAFQMGR.

7 helical membrane passes run T42–I62, L68–L88, I118–L137, W144–S166, A180–T200, L201–I221, and I237–Q257.

This sequence belongs to the CobS family. Mg(2+) is required as a cofactor.

It localises to the cell inner membrane. The enzyme catalyses alpha-ribazole + adenosylcob(III)inamide-GDP = adenosylcob(III)alamin + GMP + H(+). The catalysed reaction is alpha-ribazole 5'-phosphate + adenosylcob(III)inamide-GDP = adenosylcob(III)alamin 5'-phosphate + GMP + H(+). Its pathway is cofactor biosynthesis; adenosylcobalamin biosynthesis; adenosylcobalamin from cob(II)yrinate a,c-diamide: step 7/7. Functionally, joins adenosylcobinamide-GDP and alpha-ribazole to generate adenosylcobalamin (Ado-cobalamin). Also synthesizes adenosylcobalamin 5'-phosphate from adenosylcobinamide-GDP and alpha-ribazole 5'-phosphate. The protein is Adenosylcobinamide-GDP ribazoletransferase of Bradyrhizobium diazoefficiens (strain JCM 10833 / BCRC 13528 / IAM 13628 / NBRC 14792 / USDA 110).